The following is a 709-amino-acid chain: Threonine--tRNA ligase, mitochondrial 1 (709 aa).

A mitochondrion-targeting transit peptide spans 1-21; the sequence is MLLRLTARSIRRFTTSSSSLP. Residues 73-135 enclose the TGS domain; the sequence is DPIKVTLPDG…EGDCKLELFK (63 aa). The Zn(2+) site is built by cysteine 407, histidine 458, and histidine 584.

Belongs to the class-II aminoacyl-tRNA synthetase family.

It localises to the mitochondrion. The protein localises to the cytoplasm. The protein resides in the cytosol. The enzyme catalyses tRNA(Thr) + L-threonine + ATP = L-threonyl-tRNA(Thr) + AMP + diphosphate + H(+). The protein is Threonine--tRNA ligase, mitochondrial 1 of Arabidopsis thaliana (Mouse-ear cress).